The sequence spans 299 residues: Large ribosomal subunit protein uL29m (299 aa).

Belongs to the universal ribosomal protein uL29 family. In terms of assembly, component of the mitochondrial large ribosomal subunit. Mature mitochondrial ribosomes consist of a small (37S) and a large (54S) subunit. The 37S subunit contains at least 33 different proteins and 1 molecule of RNA (15S). The 54S subunit contains at least 45 different proteins and 1 molecule of RNA (21S).

Its subcellular location is the mitochondrion. This is Large ribosomal subunit protein uL29m (MRPL4) from Scheffersomyces stipitis (strain ATCC 58785 / CBS 6054 / NBRC 10063 / NRRL Y-11545) (Yeast).